Here is a 232-residue protein sequence, read N- to C-terminus: PsbP domain-containing protein 2, chloroplastic (232 aa).

The transit peptide at 1-34 (MWSQSFLGSAPKLCLFSSSLPPFSHHKIHKFFCF) directs the protein to the chloroplast. The N-terminal 37 residues, 35–71 (AQNPSSTVSINLSKRHLNLSILTLFFNGFLLDNKAKS), are a transit peptide targeting the thylakoid.

The protein belongs to the PsbP family.

The protein resides in the plastid. Its subcellular location is the chloroplast thylakoid lumen. In Arabidopsis thaliana (Mouse-ear cress), this protein is PsbP domain-containing protein 2, chloroplastic (PPD2).